The following is a 418-amino-acid chain: Geranylgeranyl pyrophosphate synthase (418 aa).

Residues Thr51–Pro64 show a composition bias toward polar residues. Residues Thr51–Pro73 are disordered. Isopentenyl diphosphate contacts are provided by Lys143, Arg146, and His175. The Mg(2+) site is built by Asp182 and Asp186. Arg191 is a binding site for dimethylallyl diphosphate. Isopentenyl diphosphate is bound at residue Arg192. Residues Lys269, Thr270, Gln305, Lys322, and Lys332 each coordinate dimethylallyl diphosphate.

It belongs to the FPP/GGPP synthase family. It depends on Mg(2+) as a cofactor.

The protein resides in the cytoplasm. It catalyses the reaction isopentenyl diphosphate + dimethylallyl diphosphate = (2E)-geranyl diphosphate + diphosphate. It carries out the reaction isopentenyl diphosphate + (2E)-geranyl diphosphate = (2E,6E)-farnesyl diphosphate + diphosphate. The catalysed reaction is isopentenyl diphosphate + (2E,6E)-farnesyl diphosphate = (2E,6E,10E)-geranylgeranyl diphosphate + diphosphate. The protein operates within isoprenoid biosynthesis; farnesyl diphosphate biosynthesis; farnesyl diphosphate from geranyl diphosphate and isopentenyl diphosphate: step 1/1. Its pathway is isoprenoid biosynthesis; geranyl diphosphate biosynthesis; geranyl diphosphate from dimethylallyl diphosphate and isopentenyl diphosphate: step 1/1. It participates in isoprenoid biosynthesis; geranylgeranyl diphosphate biosynthesis; geranylgeranyl diphosphate from farnesyl diphosphate and isopentenyl diphosphate: step 1/1. Catalyzes the trans-addition of the three molecules of IPP onto DMAPP to form geranylgeranyl pyrophosphate. This is Geranylgeranyl pyrophosphate synthase (GGS) from Fusarium fujikuroi (Bakanae and foot rot disease fungus).